Consider the following 234-residue polypeptide: Adenosine 5'-phosphosulfate reductase (234 aa).

[4Fe-4S] cluster is bound by residues Cys-120, Cys-121, Cys-203, and Cys-206. Catalysis depends on Cys-229, which acts as the Nucleophile; cysteine thiosulfonate intermediate.

It belongs to the PAPS reductase family. CysH subfamily. [4Fe-4S] cluster serves as cofactor.

It is found in the cytoplasm. It carries out the reaction [thioredoxin]-disulfide + sulfite + AMP + 2 H(+) = adenosine 5'-phosphosulfate + [thioredoxin]-dithiol. It functions in the pathway sulfur metabolism; hydrogen sulfide biosynthesis; sulfite from sulfate. In terms of biological role, catalyzes the formation of sulfite from adenosine 5'-phosphosulfate (APS) using thioredoxin as an electron donor. The sequence is that of Adenosine 5'-phosphosulfate reductase from Bacillus cytotoxicus (strain DSM 22905 / CIP 110041 / 391-98 / NVH 391-98).